We begin with the raw amino-acid sequence, 351 residues long: LIM/homeobox protein ceh-14 (351 aa).

LIM zinc-binding domains are found at residues 46 to 105 (AICS…KFGT) and 105 to 169 (TKCS…ARDK). The segment at residues 180–239 (NKRPRTTISAKSLETLKQAYQTSSKPARHVREQLASETGLDMRVVQVWFQNRRAKEKRLK) is a DNA-binding region (homeobox). The span at 238–254 (LKKDAGRRWKSSNRAES) shows a compositional bias: basic and acidic residues. The disordered stretch occupies residues 238–268 (LKKDAGRRWKSSNRAESDSNSPIESINGQSP). A compositionally biased stretch (polar residues) spans 255-268 (DSNSPIESINGQSP).

Interacts (via LIM zinc-binding domains 1 and 2) with lim-7 (via LID domain). May interact with itself. May interact with homeobox protein ceh-63. Expressed in the anterior AFDL/R sensory neurons and BDUL/R and ALA interneurons, and in PVT, PVQL/R, DVC, PVNL/R, PVWL/R, PVR, PHCL/R, PHAL/R and PHBL/R cells in the tail region.

It is found in the nucleus. Functionally, probable transcription factor, modulating expression of helix-loop-helix protein mbr-1 and homeobox protein ceh-63, perhaps acting in concert with ceh-63. Binds to a motif including the sequence 5'-CTAAT-3' in regulatory promoter elements. Confers thermosensory function to neurons. Required for correct AFD-mediated thermotaxis. In concert with homeobox protein ttx-1, perhaps as components in a complex, specifies identity of AFD neurons, acting by synergistically regulating receptor-type guanylyl cyclase gcy-8, gcy-18 and other genes. Involved in postembryonic differentiation of the ALA neuron, and regulation of genes that contribute to behavioral quiescence, a sleep-like behavior mediated by ALA. Regulates its own expression and also that of homeodomain ceh-17, together forming an autoregulatory loop in the ALA neuron. Required for initial pathfinding of the ALA axons, but largely dispensable for axon migration. Involved in regulating postembryonic axon maintenance in the ventral nerve cord, acting in concert with LIM homeobox protein lim-6, via modulation of expression of immunoglobulin domain zig genes in the interneuron PVT. Plays a role in controlling the peptidergic identity of the BDU neurons, regulating expression of flp-10, nlp-1, and nlp-15, thereby modulating the harsh touch response. The polypeptide is LIM/homeobox protein ceh-14 (ceh-14) (Caenorhabditis elegans).